The following is a 428-amino-acid chain: Glutamate-1-semialdehyde 2,1-aminomutase (428 aa).

Position 267 is an N6-(pyridoxal phosphate)lysine (Lys-267).

It belongs to the class-III pyridoxal-phosphate-dependent aminotransferase family. HemL subfamily. Homodimer. Requires pyridoxal 5'-phosphate as cofactor.

It localises to the cytoplasm. The enzyme catalyses (S)-4-amino-5-oxopentanoate = 5-aminolevulinate. It functions in the pathway porphyrin-containing compound metabolism; protoporphyrin-IX biosynthesis; 5-aminolevulinate from L-glutamyl-tRNA(Glu): step 2/2. The protein operates within porphyrin-containing compound metabolism; chlorophyll biosynthesis. The chain is Glutamate-1-semialdehyde 2,1-aminomutase from Prochlorococcus marinus (strain NATL1A).